Consider the following 319-residue polypeptide: 4-hydroxy-3-methylbut-2-enyl diphosphate reductase (319 aa).

C17 provides a ligand contact to [4Fe-4S] cluster. (2E)-4-hydroxy-3-methylbut-2-enyl diphosphate-binding residues include H46 and H79. The dimethylallyl diphosphate site is built by H46 and H79. Isopentenyl diphosphate is bound by residues H46 and H79. C101 lines the [4Fe-4S] cluster pocket. (2E)-4-hydroxy-3-methylbut-2-enyl diphosphate is bound at residue H129. A dimethylallyl diphosphate-binding site is contributed by H129. H129 lines the isopentenyl diphosphate pocket. E131 serves as the catalytic Proton donor. A (2E)-4-hydroxy-3-methylbut-2-enyl diphosphate-binding site is contributed by T170. [4Fe-4S] cluster is bound at residue C200. S228, S229, N230, and S273 together coordinate (2E)-4-hydroxy-3-methylbut-2-enyl diphosphate. Residues S228, S229, N230, and S273 each contribute to the dimethylallyl diphosphate site. Isopentenyl diphosphate-binding residues include S228, S229, N230, and S273.

Belongs to the IspH family. [4Fe-4S] cluster is required as a cofactor.

The enzyme catalyses isopentenyl diphosphate + 2 oxidized [2Fe-2S]-[ferredoxin] + H2O = (2E)-4-hydroxy-3-methylbut-2-enyl diphosphate + 2 reduced [2Fe-2S]-[ferredoxin] + 2 H(+). It catalyses the reaction dimethylallyl diphosphate + 2 oxidized [2Fe-2S]-[ferredoxin] + H2O = (2E)-4-hydroxy-3-methylbut-2-enyl diphosphate + 2 reduced [2Fe-2S]-[ferredoxin] + 2 H(+). Its pathway is isoprenoid biosynthesis; dimethylallyl diphosphate biosynthesis; dimethylallyl diphosphate from (2E)-4-hydroxy-3-methylbutenyl diphosphate: step 1/1. It participates in isoprenoid biosynthesis; isopentenyl diphosphate biosynthesis via DXP pathway; isopentenyl diphosphate from 1-deoxy-D-xylulose 5-phosphate: step 6/6. Functionally, catalyzes the conversion of 1-hydroxy-2-methyl-2-(E)-butenyl 4-diphosphate (HMBPP) into a mixture of isopentenyl diphosphate (IPP) and dimethylallyl diphosphate (DMAPP). Acts in the terminal step of the DOXP/MEP pathway for isoprenoid precursor biosynthesis. The chain is 4-hydroxy-3-methylbut-2-enyl diphosphate reductase from Cereibacter sphaeroides (strain ATCC 17025 / ATH 2.4.3) (Rhodobacter sphaeroides).